Consider the following 267-residue polypeptide: tRNA pseudouridine synthase A (267 aa).

Aspartate 51 (nucleophile) is an active-site residue. Residue tyrosine 109 coordinates substrate.

It belongs to the tRNA pseudouridine synthase TruA family. As to quaternary structure, homodimer.

It carries out the reaction uridine(38/39/40) in tRNA = pseudouridine(38/39/40) in tRNA. Functionally, formation of pseudouridine at positions 38, 39 and 40 in the anticodon stem and loop of transfer RNAs. In Staphylococcus epidermidis (strain ATCC 35984 / DSM 28319 / BCRC 17069 / CCUG 31568 / BM 3577 / RP62A), this protein is tRNA pseudouridine synthase A.